A 207-amino-acid polypeptide reads, in one-letter code: N-(5'-phosphoribosyl)anthranilate isomerase (207 aa).

Belongs to the TrpF family.

The catalysed reaction is N-(5-phospho-beta-D-ribosyl)anthranilate = 1-(2-carboxyphenylamino)-1-deoxy-D-ribulose 5-phosphate. Its pathway is amino-acid biosynthesis; L-tryptophan biosynthesis; L-tryptophan from chorismate: step 3/5. The sequence is that of N-(5'-phosphoribosyl)anthranilate isomerase from Stutzerimonas stutzeri (strain A1501) (Pseudomonas stutzeri).